The chain runs to 71 residues: uncharacterized protein (71 aa).

Polar residues predominate over residues 20–32 (SSGRRQLTATQPR). The segment at 20 to 46 (SSGRRQLTATQPRSDPESQRGRTSSNR) is disordered.

This is an uncharacterized protein from Rhizobium leguminosarum.